A 513-amino-acid polypeptide reads, in one-letter code: Maturase K (513 aa).

Belongs to the intron maturase 2 family. MatK subfamily.

The protein resides in the plastid. Its subcellular location is the chloroplast. In terms of biological role, usually encoded in the trnK tRNA gene intron. Probably assists in splicing its own and other chloroplast group II introns. This Cynodon dactylon (Bermuda grass) protein is Maturase K.